Here is a 627-residue protein sequence, read N- to C-terminus: (-)-alpha-pinene synthase 1, chloroplastic (627 aa).

Residues 1 to 36 (MALVSIAPLASKSCLHKSLSSSAHELKTICRTIPTL) constitute a chloroplast transit peptide. Residues aspartate 378, aspartate 382, and aspartate 530 each contribute to the Mg(2+) site. Positions 378–382 (DDMYD) match the DDXXD motif motif.

The protein belongs to the terpene synthase family. Tpsd subfamily. The cofactor is Mg(2+). Mn(2+) is required as a cofactor.

The protein localises to the plastid. It localises to the chloroplast. The catalysed reaction is (2E)-geranyl diphosphate = (1S,5S)-beta-pinene + diphosphate. The enzyme catalyses (2E)-geranyl diphosphate = (1S,5S)-alpha-pinene + diphosphate. It functions in the pathway terpene metabolism; oleoresin biosynthesis. Functionally, terpene synthase (TPS) involved in the biosynthesis of monoterpene natural products included in conifer oleoresin secretions and volatile emissions; these compounds contribute to biotic and abiotic stress defense against herbivores and pathogens. Catalyzes the conversion of (2E)-geranyl diphosphate (GPP) to (1S,5S)-beta-pinene. The chain is (-)-alpha-pinene synthase 1, chloroplastic from Picea sitchensis (Sitka spruce).